A 104-amino-acid polypeptide reads, in one-letter code: Matrix Gla protein (104 aa).

A signal peptide spans 1–19 (MKSLLPLAILAALAVATLC). 4-carboxyglutamate is present on Glu21. Phosphoserine occurs at positions 22, 25, and 28. The Gla domain maps to 51 to 97 (RAKAQKRVQERNKPAYEINREACDDYKLCERYAMVYGYNAAYNRYFR). Residues Glu60, Glu67, and Glu71 each carry the 4-carboxyglutamate modification. Cys73 and Cys79 are disulfide-bonded.

The protein belongs to the osteocalcin/matrix Gla protein family. Requires vitamin K-dependent gamma-carboxylation for its function.

Its subcellular location is the secreted. Associates with the organic matrix of bone and cartilage. Thought to act as an inhibitor of bone formation. The polypeptide is Matrix Gla protein (Mgp) (Mus musculus (Mouse)).